Reading from the N-terminus, the 559-residue chain is MEKVLTDIEIAQKAQMKPIGEIAEKYGILEDELELYGKYKAKLSLDIFDRLKDEKDGKLVLVTAISPTPAGEGKSTTSIGLGQALNKIGKKTFIALREPSLGPVFGVKGGAAGGGYAQVVPMEDINLHFTGDMHAIGITNNLLSAAIDNHIHQGNALKIDSREIVWKRVVDMNDRALRNVVVGMGGKACGFTRQDGFMITVASEVMAILCLAKDLMDLKERLGNIIVAYSLEGKPVTAGDLKVNGAMAMLLKDAIKPNIVQTLENTPALIHGGPFANIAHGCNSLIATRLGLKLGDILVTEAGFGADLGAEKFLDIKCRYGGLKPDAVVIVATIRALKMHGGVKKTELSGENLEALDKGFANLQKHITNMKNFGLPVMVAVNRFITDSEAEIDLLIKKCKEIGVEVSLNEVWAKGGEGGIEMAEKLVKILETEKPNYKPLYDVEDSIPEKLNKIVKELYGGEGVVIESSAMKQIKKLEEIGLDKLPICMAKTQFSFSDDATLMGAPKGFNITIKNVRVSAGAGFIVCETGNIMVMPGLPKVPAAEKMDVDENGNISGLF.

68-75 (TPAGEGKS) contacts ATP.

The protein belongs to the formate--tetrahydrofolate ligase family.

The enzyme catalyses (6S)-5,6,7,8-tetrahydrofolate + formate + ATP = (6R)-10-formyltetrahydrofolate + ADP + phosphate. It functions in the pathway one-carbon metabolism; tetrahydrofolate interconversion. In Clostridium tetani (strain Massachusetts / E88), this protein is Formate--tetrahydrofolate ligase.